We begin with the raw amino-acid sequence, 248 residues long: Homeobox-leucine zipper protein HOX15 (248 aa).

The segment at 1 to 44 is disordered; that stretch reads MAQDDEDVGLALGLSLGSGGHRRQRESRDEAPSSAAASLLTLRL. Residues 32–44 show a composition bias toward low complexity; sequence PSSAAASLLTLRL. Residues 91 to 150 constitute a DNA-binding region (homeobox); sequence NSRKKLRLSKEQSALLEDRFKEHSTLNPKQKVALAKQLNLRPRQVEVWFQNRRARTKLKQ. Residues 149–193 are leucine-zipper; it reads KQTEVDCELLKRCCETLTEENRRLHRELQQLRALTHSTAAGFFMA. The segment at 223 to 248 is disordered; sequence PTAAADRTNKPTAPHLFSPFAKSAAC.

The protein belongs to the HD-ZIP homeobox family. Class II subfamily. As to expression, expressed in seedlings, stems, leaf blades and panicles.

It localises to the nucleus. Probable transcription factor. This Oryza sativa subsp. indica (Rice) protein is Homeobox-leucine zipper protein HOX15 (HOX15).